We begin with the raw amino-acid sequence, 320 residues long: ATP-dependent 6-phosphofructokinase (320 aa).

G12 provides a ligand contact to ATP. Residue 22–26 coordinates ADP; it reads RGVVR. Residues 73–74 and 103–106 contribute to the ATP site; these read RF and GDGS. D104 is a binding site for Mg(2+). 126-128 contributes to the substrate binding site; that stretch reads TID. The active-site Proton acceptor is D128. R155 lines the ADP pocket. Residues R163 and 170–172 each bind substrate; that span reads MGR. Residues 186–188, K212, and 214–216 each bind ADP; these read GCE and KKH. Substrate contacts are provided by residues E223, R244, and 250 to 253; that span reads HIQR.

It belongs to the phosphofructokinase type A (PFKA) family. ATP-dependent PFK group I subfamily. Prokaryotic clade 'B1' sub-subfamily. As to quaternary structure, homotetramer. Mg(2+) serves as cofactor.

It localises to the cytoplasm. It carries out the reaction beta-D-fructose 6-phosphate + ATP = beta-D-fructose 1,6-bisphosphate + ADP + H(+). It participates in carbohydrate degradation; glycolysis; D-glyceraldehyde 3-phosphate and glycerone phosphate from D-glucose: step 3/4. With respect to regulation, allosterically activated by ADP and other diphosphonucleosides, and allosterically inhibited by phosphoenolpyruvate. Catalyzes the phosphorylation of D-fructose 6-phosphate to fructose 1,6-bisphosphate by ATP, the first committing step of glycolysis. The sequence is that of ATP-dependent 6-phosphofructokinase from Vibrio campbellii (strain ATCC BAA-1116).